Here is a 316-residue protein sequence, read N- to C-terminus: ATP synthase gamma chain (316 aa).

It belongs to the ATPase gamma chain family. In terms of assembly, F-type ATPases have 2 components, CF(1) - the catalytic core - and CF(0) - the membrane proton channel. CF(1) has five subunits: alpha(3), beta(3), gamma(1), delta(1), epsilon(1). CF(0) has three main subunits: a, b and c.

Its subcellular location is the cellular thylakoid membrane. Its function is as follows. Produces ATP from ADP in the presence of a proton gradient across the membrane. The gamma chain is believed to be important in regulating ATPase activity and the flow of protons through the CF(0) complex. The chain is ATP synthase gamma chain from Synechococcus elongatus (strain ATCC 33912 / PCC 7942 / FACHB-805) (Anacystis nidulans R2).